Here is a 1494-residue protein sequence, read N- to C-terminus: Neuropathy target esterase sws (1494 aa).

The Lumenal segment spans residues 1–35; sequence MDVLELLRVSGSNMYYSTFLADAWCYYISNQITMT. Residues 36-56 traverse the membrane as a helical segment; it reads MYLYCALGVLSMLFIGWFVYF. Topologically, residues 57 to 1494 are cytoplasmic; that stretch reads KRLARLRLRH…NTNNETKNYL (1438 aa). 176-303 is a binding site for a nucleoside 3',5'-cyclic phosphate; that stretch reads IFGHFEKPIF…IRVIQVIMIR (128 aa). The span at 362–372 shows a compositional bias: low complexity; it reads ASGTAGSTHTA. Disordered regions lie at residues 362–405 and 422–452; these read ASGT…ELSG and NSYPPLYHQRESDGNLSTRRGSITQQEQPEV. Polar residues predominate over residues 435 to 449; sequence GNLSTRRGSITQQEQ. At S443 the chain carries Phosphoserine. Residues 474–601 and 590–717 contribute to the a nucleoside 3',5'-cyclic phosphate site; these read ELGL…VVRR and IVLD…LSHR. Residues 944–1110 form the PNPLA domain; that stretch reads LVLGGGGARG…VNNLPGHLWR (167 aa). Residues 948-953 carry the GXGXXG motif; it reads GGGARG. The short motif at 975-979 is the GXSXG element; the sequence is GVSIG. S977 acts as the Nucleophile in catalysis. The Proton acceptor role is filled by D1097. The short motif at 1097 to 1099 is the DGA/G element; sequence DGG. Residues 1367–1494 form a disordered region; sequence MDKATQSTPP…NTNNETKNYL (128 aa). Residues 1370-1381 are compositionally biased toward polar residues; that stretch reads ATQSTPPLQSKA. Basic and acidic residues-rich tracts occupy residues 1389–1420 and 1452–1483; these read SKEEARHEWEIKREQKQELAREQELERERELS and MDKKKTKDNDRDEVRGSAEDKGKEKEEDKENR. A compositionally biased stretch (polar residues) spans 1484–1494; that stretch reads SNTNNETKNYL.

It belongs to the NTE family. As to quaternary structure, interacts with Pka-C3; interaction inhibits the catalytic function of Pka-C3 and the esterase activity of sws.

Its subcellular location is the endoplasmic reticulum membrane. It catalyses the reaction a 1-acyl-sn-glycero-3-phosphocholine + H2O = sn-glycerol 3-phosphocholine + a fatty acid + H(+). Functionally, phospholipase B that deacylates intracellular phosphatidylcholine (PtdCho), generating glycerophosphocholine (GroPtdCho). This deacylation occurs at both sn-2 and sn-1 positions of PtdCho. Its specific chemical modification by certain organophosphorus (OP) compounds leads to distal axonopathy. Plays a role in the signaling mechanism between neurons and glia that regulates glia wrapping during development of the adult brain. Essential for membrane lipid homeostasis and cell survival in both neurons and glia of the adult brain. This is Neuropathy target esterase sws from Drosophila pseudoobscura pseudoobscura (Fruit fly).